A 235-amino-acid polypeptide reads, in one-letter code: MRAGHALVLFSGGQDSTTCLAWALERFERVETIGFDYGQRHHVELEARTAVLAALRGRFPAWSARLGDDHMVDLAVLGQISDTALTRDTAIQMTEAGLPNTFVPGRNLLFFQLAAAVGYRRGLHTLVGGMCETDFSGYPDCRDDTLKALQVALSLGMGQRFTIETPLMWIDKAETWEMARQLGGDELVQLIVEDTHTCYHGVRGALHAWGHGCGECPACALRRAGHERWTAQHTA.

10 to 20 provides a ligand contact to ATP; the sequence is FSGGQDSTTCL. Zn(2+)-binding residues include C198, C213, C216, and C219.

This sequence belongs to the QueC family. The cofactor is Zn(2+).

It catalyses the reaction 7-carboxy-7-deazaguanine + NH4(+) + ATP = 7-cyano-7-deazaguanine + ADP + phosphate + H2O + H(+). Its pathway is purine metabolism; 7-cyano-7-deazaguanine biosynthesis. In terms of biological role, catalyzes the ATP-dependent conversion of 7-carboxy-7-deazaguanine (CDG) to 7-cyano-7-deazaguanine (preQ(0)). The sequence is that of 7-cyano-7-deazaguanine synthase from Paracidovorax citrulli (strain AAC00-1) (Acidovorax citrulli).